The chain runs to 122 residues: Large ribosomal subunit protein uL14 (122 aa).

It belongs to the universal ribosomal protein uL14 family. In terms of assembly, part of the 50S ribosomal subunit. Forms a cluster with proteins L3 and L19. In the 70S ribosome, L14 and L19 interact and together make contacts with the 16S rRNA in bridges B5 and B8.

Binds to 23S rRNA. Forms part of two intersubunit bridges in the 70S ribosome. This is Large ribosomal subunit protein uL14 from Mycobacterium sp. (strain KMS).